The chain runs to 247 residues: Adenosylcobinamide-GDP ribazoletransferase (247 aa).

5 helical membrane passes run 34 to 54, 59 to 79, 113 to 133, 138 to 158, and 194 to 214; these read IITF…VFMA, FGVP…TGGF, GGLA…ELAL, ILAS…LLMY, and VLLP…AIFI.

This sequence belongs to the CobS family. Mg(2+) is required as a cofactor.

It is found in the cell inner membrane. It carries out the reaction alpha-ribazole + adenosylcob(III)inamide-GDP = adenosylcob(III)alamin + GMP + H(+). It catalyses the reaction alpha-ribazole 5'-phosphate + adenosylcob(III)inamide-GDP = adenosylcob(III)alamin 5'-phosphate + GMP + H(+). Its pathway is cofactor biosynthesis; adenosylcobalamin biosynthesis; adenosylcobalamin from cob(II)yrinate a,c-diamide: step 7/7. Joins adenosylcobinamide-GDP and alpha-ribazole to generate adenosylcobalamin (Ado-cobalamin). Also synthesizes adenosylcobalamin 5'-phosphate from adenosylcobinamide-GDP and alpha-ribazole 5'-phosphate. This Escherichia coli O17:K52:H18 (strain UMN026 / ExPEC) protein is Adenosylcobinamide-GDP ribazoletransferase.